We begin with the raw amino-acid sequence, 421 residues long: UDP-N-acetylglucosamine 1-carboxyvinyltransferase (421 aa).

Phosphoenolpyruvate is bound at residue 22-23 (KN). Residue Arg-93 participates in UDP-N-acetyl-alpha-D-glucosamine binding. The active-site Proton donor is the Cys-117. Cys-117 bears the 2-(S-cysteinyl)pyruvic acid O-phosphothioketal mark. UDP-N-acetyl-alpha-D-glucosamine contacts are provided by residues 122-126 (RPVDL), Asp-308, and Val-330.

The protein belongs to the EPSP synthase family. MurA subfamily.

The protein localises to the cytoplasm. It carries out the reaction phosphoenolpyruvate + UDP-N-acetyl-alpha-D-glucosamine = UDP-N-acetyl-3-O-(1-carboxyvinyl)-alpha-D-glucosamine + phosphate. The protein operates within cell wall biogenesis; peptidoglycan biosynthesis. In terms of biological role, cell wall formation. Adds enolpyruvyl to UDP-N-acetylglucosamine. This chain is UDP-N-acetylglucosamine 1-carboxyvinyltransferase, found in Stutzerimonas stutzeri (strain A1501) (Pseudomonas stutzeri).